We begin with the raw amino-acid sequence, 587 residues long: V-type proton ATPase catalytic subunit A (587 aa).

ATP is bound at residue 243 to 250 (GAFGCGKT).

The protein belongs to the ATPase alpha/beta chains family. As to quaternary structure, V-ATPase is a heteromultimeric enzyme composed of a peripheral catalytic V1 complex (main components: subunits A, B, C, D, E, and F) attached to an integral membrane V0 proton pore complex (main component: the proteolipid protein).

It catalyses the reaction ATP + H2O + 4 H(+)(in) = ADP + phosphate + 5 H(+)(out). Its function is as follows. Catalytic subunit of the peripheral V1 complex of vacuolar ATPase. V-ATPase vacuolar ATPase is responsible for acidifying a variety of intracellular compartments in eukaryotic cells. This is V-type proton ATPase catalytic subunit A from Cyanidium caldarium (Red alga).